A 500-amino-acid polypeptide reads, in one-letter code: NAD(P)H-quinone oxidoreductase chain 4, chloroplastic (500 aa).

14 consecutive transmembrane segments (helical) span residues 4-24 (FPWLTIIVVLPISAGSSIGFL), 37-57 (ICICILELLLTTYAFCYHFQL), 87-107 (MGPVLLTGFITTLATLAAWPV), 113-130 (LFHFLMLAMYSGQIGSFS), 134-154 (LLLFFMMWELELIPIYLLLSL), 167-187 (FILYTAGGSIFLLMGVSGMGL), 208-228 (ALEIIFYIGFFIAYAAKSPII), 242-262 (HYSTCMLLAGILLKMGAYGLV), 272-292 (AHSIFSPWLMIIGAIQIIYAA), 305-325 (IAYSSVSHMGFITIGIGSITD), 330-350 (GSILQIISHGFIGAALFFLAG), 386-406 (LALPGMSGFVAESVVFLGIIT), 416-436 (ILITFVMAIGMILTPIYSLSM), and 462-482 (LFILICILLPVIGIGIYPDFV).

It belongs to the complex I subunit 4 family.

It localises to the plastid. It is found in the chloroplast thylakoid membrane. It carries out the reaction a plastoquinone + NADH + (n+1) H(+)(in) = a plastoquinol + NAD(+) + n H(+)(out). The enzyme catalyses a plastoquinone + NADPH + (n+1) H(+)(in) = a plastoquinol + NADP(+) + n H(+)(out). In Illicium oligandrum (Star anise), this protein is NAD(P)H-quinone oxidoreductase chain 4, chloroplastic.